We begin with the raw amino-acid sequence, 258 residues long: UPF0246 protein plu0566 (258 aa).

It belongs to the UPF0246 family.

This is UPF0246 protein plu0566 from Photorhabdus laumondii subsp. laumondii (strain DSM 15139 / CIP 105565 / TT01) (Photorhabdus luminescens subsp. laumondii).